We begin with the raw amino-acid sequence, 210 residues long: High-affinity nitrate transporter 3.1 (210 aa).

The N-terminal stretch at 1–22 (MAIQKILFASLLICSLIQSIHG) is a signal peptide. A helical transmembrane segment spans residues 178 to 198 (LDIASICFSVFSVVALVVFFV).

This sequence belongs to the NAR2 family. Heterotetramer composed of two NRT2.1 and two NRT3.1. Interacts with NRT2.1 and NRT2.3. Interacts with all other NRT2 transporters, including NRT2.5. Highly expressed in roots. Detected in shoots.

It localises to the cell membrane. In terms of biological role, acts as a dual component transporter with NTR2.1. Required for high-affinity nitrate transport. Acts as a repressor of lateral root initiation. May be involved in targeting NRT2 proteins to the plasma membrane. This is High-affinity nitrate transporter 3.1 (NRT3.1) from Arabidopsis thaliana (Mouse-ear cress).